The chain runs to 278 residues: Tryptophan synthase alpha chain (278 aa).

Residues Glu50 and Asp61 each act as proton acceptor in the active site.

The protein belongs to the TrpA family. Tetramer of two alpha and two beta chains.

It catalyses the reaction (1S,2R)-1-C-(indol-3-yl)glycerol 3-phosphate + L-serine = D-glyceraldehyde 3-phosphate + L-tryptophan + H2O. Its pathway is amino-acid biosynthesis; L-tryptophan biosynthesis; L-tryptophan from chorismate: step 5/5. Functionally, the alpha subunit is responsible for the aldol cleavage of indoleglycerol phosphate to indole and glyceraldehyde 3-phosphate. This chain is Tryptophan synthase alpha chain, found in Rhodopseudomonas palustris (strain TIE-1).